A 401-amino-acid chain; its full sequence is MKKSIILAIGNELVEGIIIDTNSKYISKKLLEIGYKTVAINTLPDDLEILVEEIRDSLKKADLLITTGGLGPTEDDLTREAISKTVGKELIFNEKLYNSILKKVKEFHSEIPKNIEKQAWVINGARIIENPVGTAPGQILQIGEKQIIILPGPPVEMKPIFEESLKFLEKFEKIYQKRIKTLGIPEAILVEKYKDIIYKYKDVNVATLASHISGVELRFTGKKEKVDEIVKLLKEKLSDHIYALDNETIEEVVFKKLEGKSVSFAESCTGGLISAKFVSIPGISKVFKGAIVAYSNKVKEKVLNVNKNTIQKYGAVSKECVMEMAKEVSYFLDTDYAVAVSGIAGPTGGTKEKPVGTVWICAYKRENDYYLVEKFFFRGNREIIREKSALNAFNLLRRILS.

Belongs to the CinA family.

This chain is CinA-like protein, found in Thermosipho melanesiensis (strain DSM 12029 / CIP 104789 / BI429).